Here is an 87-residue protein sequence, read N- to C-terminus: Small ribosomal subunit protein bS20 (87 aa).

Belongs to the bacterial ribosomal protein bS20 family.

Its function is as follows. Binds directly to 16S ribosomal RNA. This chain is Small ribosomal subunit protein bS20, found in Brachyspira hyodysenteriae (strain ATCC 49526 / WA1).